The sequence spans 146 residues: Large-conductance mechanosensitive channel (146 aa).

The next 3 membrane-spanning stretches (helical) occupy residues 21 to 41 (VGII…ADLI), 44 to 64 (VIGL…LGDG), and 83 to 103 (GAFI…FLLV).

This sequence belongs to the MscL family. As to quaternary structure, homopentamer.

The protein resides in the cell inner membrane. Functionally, channel that opens in response to stretch forces in the membrane lipid bilayer. May participate in the regulation of osmotic pressure changes within the cell. The chain is Large-conductance mechanosensitive channel from Cereibacter sphaeroides (strain ATCC 17025 / ATH 2.4.3) (Rhodobacter sphaeroides).